Consider the following 119-residue polypeptide: uncharacterized protein (119 aa).

The next 2 helical transmembrane spans lie at 57–77 (FSHH…SILF) and 80–100 (YIFV…FILH).

It is found in the membrane. This is an uncharacterized protein from Saccharomyces cerevisiae (strain ATCC 204508 / S288c) (Baker's yeast).